Reading from the N-terminus, the 389-residue chain is S-adenosylmethionine synthase (389 aa).

An ATP-binding site is contributed by His-15. Asp-17 contacts Mg(2+). Residue Glu-43 coordinates K(+). L-methionine is bound by residues Glu-56 and Gln-99. Residues 99 to 109 (QSSDIQYSIDH) are flexible loop. ATP contacts are provided by residues 166-168 (DAK), 232-233 (RF), Asp-241, 247-248 (RK), Ser-264, and Lys-268. Asp-241 is an L-methionine binding site. Lys-272 provides a ligand contact to L-methionine.

The protein belongs to the AdoMet synthase family. Homotetramer; dimer of dimers. The cofactor is Mg(2+). Requires K(+) as cofactor.

The protein resides in the cytoplasm. The enzyme catalyses L-methionine + ATP + H2O = S-adenosyl-L-methionine + phosphate + diphosphate. The protein operates within amino-acid biosynthesis; S-adenosyl-L-methionine biosynthesis; S-adenosyl-L-methionine from L-methionine: step 1/1. In terms of biological role, catalyzes the formation of S-adenosylmethionine (AdoMet) from methionine and ATP. The overall synthetic reaction is composed of two sequential steps, AdoMet formation and the subsequent tripolyphosphate hydrolysis which occurs prior to release of AdoMet from the enzyme. The sequence is that of S-adenosylmethionine synthase from Blochmanniella pennsylvanica (strain BPEN).